We begin with the raw amino-acid sequence, 708 residues long: Fatty acid oxidation complex subunit alpha (708 aa).

An enoyl-CoA hydratase region spans residues 1 to 190; it reads MSQDKAFTME…KAGLVTEVVP (190 aa). The interval 310–708 is 3-hydroxyacyl-CoA dehydrogenase; the sequence is DSVKRVGVLG…MLENGWNFYQ (399 aa).

In the N-terminal section; belongs to the enoyl-CoA hydratase/isomerase family. This sequence in the central section; belongs to the 3-hydroxyacyl-CoA dehydrogenase family. As to quaternary structure, heterotetramer of two alpha chains (FadJ) and two beta chains (FadI).

Its subcellular location is the cytoplasm. It catalyses the reaction a (3S)-3-hydroxyacyl-CoA = a (2E)-enoyl-CoA + H2O. The catalysed reaction is a 4-saturated-(3S)-3-hydroxyacyl-CoA = a (3E)-enoyl-CoA + H2O. It carries out the reaction a (3S)-3-hydroxyacyl-CoA + NAD(+) = a 3-oxoacyl-CoA + NADH + H(+). The enzyme catalyses (3S)-3-hydroxybutanoyl-CoA = (3R)-3-hydroxybutanoyl-CoA. It functions in the pathway lipid metabolism; fatty acid beta-oxidation. Catalyzes the formation of a hydroxyacyl-CoA by addition of water on enoyl-CoA. Also exhibits 3-hydroxyacyl-CoA epimerase and 3-hydroxyacyl-CoA dehydrogenase activities. The sequence is that of Fatty acid oxidation complex subunit alpha from Idiomarina loihiensis (strain ATCC BAA-735 / DSM 15497 / L2-TR).